Here is a 577-residue protein sequence, read N- to C-terminus: Acyl-coenzyme A synthetase ACSM2B, mitochondrial (577 aa).

A mitochondrion-targeting transit peptide spans 1–46 (MHWLRKVQGLCTLWGTQMSSRTLYINSRQLVSLQWGHQEVPAKFNF). Gln-139 contributes to the CoA binding site. Residues 221–229 (TSGTSGLPK), 359–364 (EFYGQT), Asp-446, and Arg-461 contribute to the ATP site. Thr-364 is a substrate binding site. Residue 469–471 (SGY) participates in CoA binding. Residue Arg-472 participates in substrate binding. Arg-501 contacts CoA. The residue at position 513 (Ser-513) is a Phosphoserine. CoA-binding positions include Lys-532 and 540–542 (YPR). Lys-557 is an ATP binding site.

The protein belongs to the ATP-dependent AMP-binding enzyme family. In terms of assembly, monomer. It depends on Mg(2+) as a cofactor. Mn(2+) is required as a cofactor. Detected in liver.

It localises to the mitochondrion. The enzyme catalyses a medium-chain fatty acid + ATP + CoA = a medium-chain fatty acyl-CoA + AMP + diphosphate. The catalysed reaction is benzoate + ATP + CoA = benzoyl-CoA + AMP + diphosphate. It carries out the reaction hexanoate + ATP + CoA = hexanoyl-CoA + AMP + diphosphate. It catalyses the reaction butanoate + ATP + CoA = butanoyl-CoA + AMP + diphosphate. The enzyme catalyses octanoate + ATP + CoA = octanoyl-CoA + AMP + diphosphate. The catalysed reaction is decanoate + ATP + CoA = decanoyl-CoA + AMP + diphosphate. With respect to regulation, activated by monovalent cations, such as potassium, rubidium or ammonium. Catalyzes the activation of fatty acids by CoA to produce an acyl-CoA, the first step in fatty acid metabolism. Capable of activating medium-chain fatty acids (e.g. butyric (C4) to decanoic (C10) acids), and certain carboxylate-containing xenobiotics, e.g. benzoate. The polypeptide is Acyl-coenzyme A synthetase ACSM2B, mitochondrial (ACSM2B) (Homo sapiens (Human)).